The sequence spans 215 residues: ATP phosphoribosyltransferase (215 aa).

Belongs to the ATP phosphoribosyltransferase family. Short subfamily. Heteromultimer composed of HisG and HisZ subunits.

It localises to the cytoplasm. It catalyses the reaction 1-(5-phospho-beta-D-ribosyl)-ATP + diphosphate = 5-phospho-alpha-D-ribose 1-diphosphate + ATP. It participates in amino-acid biosynthesis; L-histidine biosynthesis; L-histidine from 5-phospho-alpha-D-ribose 1-diphosphate: step 1/9. In terms of biological role, catalyzes the condensation of ATP and 5-phosphoribose 1-diphosphate to form N'-(5'-phosphoribosyl)-ATP (PR-ATP). Has a crucial role in the pathway because the rate of histidine biosynthesis seems to be controlled primarily by regulation of HisG enzymatic activity. In Acidithiobacillus ferrooxidans (strain ATCC 23270 / DSM 14882 / CIP 104768 / NCIMB 8455) (Ferrobacillus ferrooxidans (strain ATCC 23270)), this protein is ATP phosphoribosyltransferase.